The sequence spans 507 residues: Sperm-associated antigen 6 (507 aa).

ARM repeat units follow at residues 31-70 (PQNI…RLAN), 73-112 (DDLA…AVGK), 115-154 (PQLA…YIAR), 157-196 (TELS…DISK), 199-238 (PELA…QIAK), 241-280 (VDLA…EIAK), 325-365 (ENLA…QLGR), and 402-441 (KAIK…KVLP).

As to quaternary structure, interacts with SPAG16 and SPAG17. As to expression, highly expressed in testis. Not detected in prostate, ovary, spleen, thymus, small intestine, colon and peripheral blood leukocytes.

The protein resides in the cytoplasm. It localises to the cytoskeleton. It is found in the cell projection. Its subcellular location is the cilium. The protein localises to the flagellum. The protein resides in the cilium axoneme. In terms of biological role, important for structural integrity of the central apparatus in the sperm tail and for flagellar motility. The polypeptide is Sperm-associated antigen 6 (Spag6) (Mus musculus (Mouse)).